The primary structure comprises 101 residues: Small ribosomal subunit protein bS18c (101 aa).

It belongs to the bacterial ribosomal protein bS18 family. As to quaternary structure, part of the 30S ribosomal subunit.

It localises to the plastid. Its subcellular location is the chloroplast. This Vitis vinifera (Grape) protein is Small ribosomal subunit protein bS18c.